Here is a 283-residue protein sequence, read N- to C-terminus: Pantothenate synthetase (283 aa).

34–41 (MGALHDGH) is a binding site for ATP. His-41 (proton donor) is an active-site residue. Gln-65 lines the (R)-pantoate pocket. Beta-alanine is bound at residue Gln-65. ATP is bound at residue 152–155 (GSKD). Position 158 (Gln-158) interacts with (R)-pantoate. ATP contacts are provided by residues Val-181 and 189-192 (MSSR).

It belongs to the pantothenate synthetase family. In terms of assembly, homodimer.

It localises to the cytoplasm. The catalysed reaction is (R)-pantoate + beta-alanine + ATP = (R)-pantothenate + AMP + diphosphate + H(+). It functions in the pathway cofactor biosynthesis; (R)-pantothenate biosynthesis; (R)-pantothenate from (R)-pantoate and beta-alanine: step 1/1. Its function is as follows. Catalyzes the condensation of pantoate with beta-alanine in an ATP-dependent reaction via a pantoyl-adenylate intermediate. The chain is Pantothenate synthetase from Rhodopseudomonas palustris (strain ATCC BAA-98 / CGA009).